A 734-amino-acid polypeptide reads, in one-letter code: Exonuclease 1 (734 aa).

An N-domain region spans residues 1–99; sequence MGIQGLLQFL…KARREKRQTN (99 aa). Residues aspartate 30, aspartate 78, glutamate 150, aspartate 152, aspartate 171, aspartate 173, and aspartate 225 each coordinate Mg(2+). The segment at 138–229 is I-domain; sequence RSEGVDYIVA…ILSGCDYLPS (92 aa). 3 disordered regions span residues 599 to 650, 656 to 675, and 685 to 716; these read EAEN…CQFT, AHQS…KVPG, and GLRT…NENV. A compositionally biased stretch (polar residues) spans 604–620; the sequence is PSWQSSCIKSDTVSQID. Basic and acidic residues predominate over residues 621–641; it reads SNEKLLKKQDIEDTDSDEHAS. The span at 700-715 shows a compositional bias: polar residues; sequence GLTNRSNTKATRNNEN.

This sequence belongs to the XPG/RAD2 endonuclease family. EXO1 subfamily. Mg(2+) serves as cofactor.

It localises to the nucleus. Its function is as follows. 5'-&gt;3' double-stranded DNA exonuclease which may also contain a cryptic 3'-&gt;5' double-stranded DNA exonuclease activity. Also exhibits endonuclease activity against 5'-overhanging flap structures similar to those generated by displacement synthesis when DNA polymerase encounters the 5'-end of a downstream Okazaki fragment. Required for DNA mismatch repair (MMR). The sequence is that of Exonuclease 1 (exo1) from Xenopus laevis (African clawed frog).